Here is a 378-residue protein sequence, read N- to C-terminus: MTMVGSRTSPIFNALRVELNAREAELVEIPLIQPADPFLDMAGEDLRRRIFLTENENGDSLCLRPEFTIPVCRNHIALNAATPKRYAYLGEVFRQRRDGAAEFLQAGIEDLGAADEAASDARSLADALSCVKAIAPDAPLEIVLGDQSVFAGMLKALGLPQGWRKKLLRSFGDAHSMDLALAELTGTQRRDPLPESLAVLVAEGDEIGLARMLEAEMLEAGISPGAGRTPVEIARRLIEKEDLAATHFPAAALDLLRQFLAIRVSLDMAAVTLRAFAADNALDLGAVLQKFEARADAIAQAGIEMKDIIYDASFGRPLDYYTGLVYEIRDASNRQDGVLAGGGRYDRLLTMLGACEAIPGVGFSIWLDRLQALAGEKQ.

It belongs to the class-II aminoacyl-tRNA synthetase family. HisZ subfamily. Heteromultimer composed of HisG and HisZ subunits.

The protein resides in the cytoplasm. Its pathway is amino-acid biosynthesis; L-histidine biosynthesis; L-histidine from 5-phospho-alpha-D-ribose 1-diphosphate: step 1/9. Its function is as follows. Required for the first step of histidine biosynthesis. May allow the feedback regulation of ATP phosphoribosyltransferase activity by histidine. This is ATP phosphoribosyltransferase regulatory subunit from Brucella abortus (strain 2308).